Reading from the N-terminus, the 665-residue chain is Probable arginine--tRNA ligase, cytoplasmic (665 aa).

L-arginine-binding positions include 204-206 (SPN), His215, Tyr390, Asp394, and Gln418. Residues 205-216 (PNIAKQMHVGHL) carry the 'HIGH' region motif. The interaction with tRNA stretch occupies residues 535–549 (NTAVYLLYTYTRICS).

It belongs to the class-I aminoacyl-tRNA synthetase family.

The protein localises to the cytoplasm. It is found in the cytosol. It catalyses the reaction tRNA(Arg) + L-arginine + ATP = L-arginyl-tRNA(Arg) + AMP + diphosphate. In terms of biological role, forms part of a macromolecular complex that catalyzes the attachment of specific amino acids to cognate tRNAs during protein synthesis. This is Probable arginine--tRNA ligase, cytoplasmic from Drosophila melanogaster (Fruit fly).